We begin with the raw amino-acid sequence, 957 residues long: Outer kinetochore KNL1 complex subunit knl-1 (957 aa).

The stretch at 87–90 (MDIT) is repeat 1. Positions 87-393 (MDITGLNSTP…NFDDVAMDIT (307 aa)) are 8 X 4 AA repeats of M-[D/E]-[I/L/M]-[S/T]. The disordered stretch occupies residues 89 to 111 (ITGLNSTPVTPKTQTPFNGSMDM). Polar residues predominate over residues 91–106 (GLNSTPVTPKTQTPFN). 7 consecutive repeat copies span residues 109 to 112 (MDMS), 206 to 209 (MDIT), 251 to 254 (MDIT), 282 to 285 (MDLT), 326 to 329 (MEMT), 367 to 370 (MEMT), and 390 to 393 (MDIT). Positions 476–504 (SLQQSSMRMSTTITEDVTASKNPESSTIS) are disordered. Residues 830-950 (KFAKESNVEI…RKKKEEMVER (121 aa)) adopt a coiled-coil conformation.

In terms of assembly, component of the KNL1 complex composed of knl-1 and kbp-5. Part of the ten-subunit outer kinetochore KMN network that includes the KNL1, MIS12 and NDC80 complexes. Interacts with the protein phosphatase 1 (PP1) catalytic subunit gsp-1; the interaction is direct. Interacts with the protein phosphatase 1 (PP1) catalytic subunit gsp-2; the interaction is direct. Interacts with the MIS12 complex subunits kbp-1, kbp-2 and mis-12. Interacts with the NDC80 complex components ndc-80 and him-10. Interacts with knl-3. Interacts with kbp-3. Interacts with kbp-4. Interacts with kbp-5.

It localises to the cytoplasm. The protein resides in the cell cortex. It is found in the chromosome. Its subcellular location is the centromere. The protein localises to the kinetochore. Its function is as follows. Acts as a component of the outer kinetochore KNL1 complex that serves as a docking point for spindle assembly checkpoint components and mediates microtubule-kinetochore interactions. Kinetochores, consisting of a centromere-associated inner segment and a microtubule-contacting outer segment, play a crucial role in chromosome segregation by mediating the physical connection between centromeric DNA and spindle microtubules. The outer kinetochore is made up of the ten-subunit KMN network, comprising the MIS12, NDC80 and KNL1 complexes, and auxiliary microtubule-associated components; together they connect the outer kinetochore with the inner kinetochore, bind microtubules, and mediate interactions with mitotic checkpoint proteins that delay anaphase until chromosomes are bioriented on the spindle. Binds the protein phosphatase 1 catalytic subunits gsp-1 and gsp-2, which has a role in delaying formation of load-bearing kinetochore-microtubule attachments. Required for the recruitment of spindle-assembly checkpoint components bub-1 and mdf-1/2 to unattached kinetochores. Binds microtubules which plays a role in silencing of the spindle assembly checkpoint, but not the formation of load-bearing microtubule-kinetochore attachments. Has a role in the correct localization of the spindly-like protein spdl-1 and the RZZ complex that is composed of rod-1, czw-1 and zwl-1 to kinetochores. This Caenorhabditis briggsae protein is Outer kinetochore KNL1 complex subunit knl-1.